Here is a 273-residue protein sequence, read N- to C-terminus: NADH-ubiquinone oxidoreductase 29.9 kDa subunit, mitochondrial (273 aa).

A mitochondrion-targeting transit peptide spans 1-8 (MRAALRLL).

The protein belongs to the complex I NDUFA5 subunit family. As to quaternary structure, complex I is composed of about 40 different subunits.

It is found in the mitochondrion inner membrane. Accessory subunit of the mitochondrial membrane respiratory chain NADH dehydrogenase (Complex I), that is believed not to be involved in catalysis. Complex I functions in the transfer of electrons from NADH to the respiratory chain. The immediate electron acceptor for the enzyme is believed to be ubiquinone. The sequence is that of NADH-ubiquinone oxidoreductase 29.9 kDa subunit, mitochondrial (nuo-32) from Neurospora crassa (strain ATCC 24698 / 74-OR23-1A / CBS 708.71 / DSM 1257 / FGSC 987).